The primary structure comprises 295 residues: Ribosomal protein L11 methyltransferase (295 aa).

Positions 146, 167, 189, and 231 each coordinate S-adenosyl-L-methionine.

This sequence belongs to the methyltransferase superfamily. PrmA family.

The protein localises to the cytoplasm. The enzyme catalyses L-lysyl-[protein] + 3 S-adenosyl-L-methionine = N(6),N(6),N(6)-trimethyl-L-lysyl-[protein] + 3 S-adenosyl-L-homocysteine + 3 H(+). Methylates ribosomal protein L11. This chain is Ribosomal protein L11 methyltransferase, found in Vibrio vulnificus (strain YJ016).